A 78-amino-acid polypeptide reads, in one-letter code: Transmembrane protein 258 (78 aa).

Residues 1–18 (MDVMQRYVSPVNPAVFPH) are Cytoplasmic-facing. The chain crosses the membrane as a helical span at residues 19–39 (LATVLLVIGTFFTAWFFIFVV). At 40–53 (SRKSSKESTLIKEL) the chain is on the cytoplasmic side. A helical membrane pass occupies residues 54–74 (LISLCASIFLGFGIVFLLLTV). Topologically, residues 75–78 (GIYV) are perinuclear space.

It belongs to the OST5 family. In terms of assembly, homodimer. Component of the oligosaccharyltransferase (OST) complex. Interacts with klar and Msp300, components of LINC complex.

It localises to the nucleus outer membrane. The protein localises to the cytoplasm. It is found in the endoplasmic reticulum membrane. Its function is as follows. Subunit of the oligosaccharyl transferase (OST) complex that catalyzes the initial transfer of a defined glycan (Glc(3)Man(9)GlcNAc(2) in eukaryotes) from the lipid carrier dolichol-pyrophosphate to an asparagine residue within an Asn-X-Ser/Thr consensus motif in nascent polypeptide chains, the first step in protein N-glycosylation. N-glycosylation occurs cotranslationally and the complex associates with the Sec61 complex at the channel-forming translocon complex that mediates protein translocation across the endoplasmic reticulum (ER). All subunits are required for a maximal enzyme activity. In addition may regulates nuclear envelope (NE) architecture and nuclear positioning through the linker of nucleoskeleton and cytoskeleton (LINC)-dependent and -independent mechanisms. This Drosophila melanogaster (Fruit fly) protein is Transmembrane protein 258.